A 231-amino-acid chain; its full sequence is ATP-dependent dethiobiotin synthetase BioD (231 aa).

12–17 provides a ligand contact to ATP; that stretch reads EVGKTV. Threonine 16 is a Mg(2+) binding site. Lysine 37 is a catalytic residue. Serine 41 serves as a coordination point for substrate. ATP is bound by residues aspartate 51, 112 to 115, and 202 to 204; these read EGAG and PKL. Aspartate 51 and glutamate 112 together coordinate Mg(2+).

This sequence belongs to the dethiobiotin synthetase family. As to quaternary structure, homodimer. The cofactor is Mg(2+).

It localises to the cytoplasm. The catalysed reaction is (7R,8S)-7,8-diammoniononanoate + CO2 + ATP = (4R,5S)-dethiobiotin + ADP + phosphate + 3 H(+). It participates in cofactor biosynthesis; biotin biosynthesis; biotin from 7,8-diaminononanoate: step 1/2. In terms of biological role, catalyzes a mechanistically unusual reaction, the ATP-dependent insertion of CO2 between the N7 and N8 nitrogen atoms of 7,8-diaminopelargonic acid (DAPA, also called 7,8-diammoniononanoate) to form a ureido ring. This chain is ATP-dependent dethiobiotin synthetase BioD, found in Bacillus subtilis subsp. natto.